The chain runs to 183 residues: Putative 3-methyladenine DNA glycosylase (183 aa).

It belongs to the DNA glycosylase MPG family.

The polypeptide is Putative 3-methyladenine DNA glycosylase (Rickettsia peacockii (strain Rustic)).